A 67-amino-acid polypeptide reads, in one-letter code: Cold shock protein ScoF (67 aa).

Positions 4–64 (GTVKWFNSEK…GQKGPQAENI (61 aa)) constitute a CSD domain.

The protein resides in the cytoplasm. The protein is Cold shock protein ScoF (scoF) of Streptomyces coelicolor (strain ATCC BAA-471 / A3(2) / M145).